The sequence spans 335 residues: Fructose-1,6-bisphosphatase class 1 (335 aa).

Positions 89, 112, 114, and 115 each coordinate Mg(2+). Residues D115 to S118, N208, Y241, and K271 each bind substrate. Position 277 (E277) interacts with Mg(2+).

This sequence belongs to the FBPase class 1 family. As to quaternary structure, homotetramer. It depends on Mg(2+) as a cofactor.

The protein resides in the cytoplasm. It catalyses the reaction beta-D-fructose 1,6-bisphosphate + H2O = beta-D-fructose 6-phosphate + phosphate. Its pathway is carbohydrate biosynthesis; gluconeogenesis. The protein is Fructose-1,6-bisphosphatase class 1 of Proteus mirabilis (strain HI4320).